A 234-amino-acid polypeptide reads, in one-letter code: 2,3-bisphosphoglycerate-dependent phosphoglycerate mutase (234 aa).

Residues 10-17 (RHGSSIWN), 23-24 (TG), Arg-62, 89-92 (ERHY), Lys-100, 116-117 (RR), and 186-187 (GN) contribute to the substrate site. His-11 serves as the catalytic Tele-phosphohistidine intermediate. The active-site Proton donor/acceptor is the Glu-89.

This sequence belongs to the phosphoglycerate mutase family. BPG-dependent PGAM subfamily. As to quaternary structure, homodimer.

The catalysed reaction is (2R)-2-phosphoglycerate = (2R)-3-phosphoglycerate. The protein operates within carbohydrate degradation; glycolysis; pyruvate from D-glyceraldehyde 3-phosphate: step 3/5. Its function is as follows. Catalyzes the interconversion of 2-phosphoglycerate and 3-phosphoglycerate. This is 2,3-bisphosphoglycerate-dependent phosphoglycerate mutase from Wigglesworthia glossinidia brevipalpis.